Here is a 1828-residue protein sequence, read N- to C-terminus: Chromodomain-helicase-DNA-binding protein 2 (1828 aa).

Basic and acidic residues predominate over residues Met-1–Ser-14. Positions Met-1 to Asp-243 are disordered. Residues Leu-15–Ser-75 are compositionally biased toward low complexity. Composition is skewed to basic and acidic residues over residues Glu-81–Glu-101, Ser-115–Ala-128, and Lys-146–Pro-155. Over residues Val-175 to Lys-204 the composition is skewed to basic residues. 2 positions are modified to phosphoserine: Ser-207 and Ser-208. The span at Glu-234 to Asp-243 shows a compositional bias: acidic residues. Thr-240 carries the phosphothreonine modification. Ser-242 bears the Phosphoserine mark. Chromo domains lie at Glu-261–Gly-353 and Gln-378–Arg-456. A Helicase ATP-binding domain is found at Ala-496–Glu-666. Residue Asp-509–Thr-516 coordinates ATP. The short motif at Asp-617–His-620 is the DEAH box element. One can recognise a Helicase C-terminal domain in the interval Leu-795–Thr-946. Disordered regions lie at residues Glu-1030–Arg-1124, Val-1331–Asp-1462, His-1556–Gly-1638, and His-1680–Thr-1828. Positions Glu-1037–Glu-1065 are enriched in basic and acidic residues. Ser-1085, Ser-1087, Ser-1365, and Ser-1386 each carry phosphoserine. The segment covering Lys-1347–Asn-1371 has biased composition (basic and acidic residues). Basic and acidic residues-rich tracts occupy residues Glu-1396–Asp-1431 and Glu-1565–Gly-1574. Positions Leu-1464–Gln-1566 are CHD1 helical C-terminal domain (CHCT). Residues Ser-1584–Leu-1601 show a composition bias toward polar residues. Basic and acidic residues-rich tracts occupy residues Arg-1698 to His-1720, Gln-1739 to Pro-1749, Asp-1760 to Glu-1772, and Ser-1795 to Glu-1814. Ser-1807 is subject to Phosphoserine.

This sequence belongs to the SNF2/RAD54 helicase family. In terms of assembly, interacts with MYOD1. Interacts with histone H3.3.

It is found in the nucleus. It catalyses the reaction ATP + H2O = ADP + phosphate + H(+). Functionally, ATP-dependent chromatin-remodeling factor that specifically binds to the promoter of target genes, leading to chromatin remodeling, possibly by promoting deposition of histone H3.3. Involved in myogenesis via interaction with MYOD1: binds to myogenic gene regulatory sequences and mediates incorporation of histone H3.3 prior to the onset of myogenic gene expression, promoting their expression. This Homo sapiens (Human) protein is Chromodomain-helicase-DNA-binding protein 2 (CHD2).